Here is a 182-residue protein sequence, read N- to C-terminus: Homeobox protein pnx (182 aa).

The segment at 1 to 34 (MHEETSNSTLQGKTSFSIADILDPAKFNGTRETR) is important for interaction with tle3a. Residues 24–63 (PAKFNGTRETREISNNRESPKTTSPTQDPSAPNIANASAA) are disordered. Positions 29-43 (GTRETREISNNRESP) are enriched in basic and acidic residues. A compositionally biased stretch (low complexity) spans 52-63 (PSAPNIANASAA). A DNA-binding region (homeobox) is located at residues 67-126 (SKRIRTAFTLDQLRILERSFQSSHYLSVFERHCIASALGLSETQVKIWFQNRRTKWKKEL).

It belongs to the NK-1 homeobox family. In terms of assembly, interacts with tle3a.

The protein localises to the nucleus. In terms of biological role, transcriptional repressor. Activity as a repressor is enhanced by binding to the corepressor tle3a. The protein is Homeobox protein pnx of Danio rerio (Zebrafish).